Consider the following 484-residue polypeptide: L-amino-acid oxidase (484 aa).

Cys-8 and Cys-171 are disulfide-bonded. FAD is bound by residues 41–42 (MS), 61–62 (EA), and Arg-69. His-73 serves as a coordination point for Zn(2+). 85-88 (GPMR) is an FAD binding site. Residue Arg-88 participates in substrate binding. The N-linked (GlcNAc...) asparagine glycan is linked to Asn-170. His-221 is a substrate binding site. Val-259 is an FAD binding site. Position 277 (Glu-277) interacts with Zn(2+). Cys-329 and Cys-410 are joined by a disulfide. Substrate is bound at residue Tyr-370. Residues Glu-455 and 462–467 (GWIDST) each bind FAD. 462–463 (GW) lines the substrate pocket.

This sequence belongs to the flavin monoamine oxidase family. FIG1 subfamily. In terms of assembly, homodimer; non-covalently linked. FAD serves as cofactor. As to expression, expressed by the venom gland.

It localises to the secreted. It carries out the reaction an L-alpha-amino acid + O2 + H2O = a 2-oxocarboxylate + H2O2 + NH4(+). Its function is as follows. Catalyzes an oxidative deamination of predominantly hydrophobic and aromatic L-amino acids, thus producing hydrogen peroxide that may contribute to the diverse toxic effects of this enzyme. Exhibits diverse biological activities, such as hemorrhage, hemolysis, edema, apoptosis of vascular endothelial cells or tumor cell lines, antibacterial and antiparasitic activities, as well as regulation of platelet aggregation. Effects of snake L-amino oxidases on platelets are controversial, since they either induce aggregation or inhibit agonist-induced aggregation. These different effects are probably due to different experimental conditions. In Vipera ammodytes ammodytes (Western sand viper), this protein is L-amino-acid oxidase.